A 372-amino-acid chain; its full sequence is 4-hydroxy-3-methylbut-2-en-1-yl diphosphate synthase (flavodoxin) (372 aa).

[4Fe-4S] cluster contacts are provided by C270, C273, C305, and E312.

The protein belongs to the IspG family. Requires [4Fe-4S] cluster as cofactor.

It catalyses the reaction (2E)-4-hydroxy-3-methylbut-2-enyl diphosphate + oxidized [flavodoxin] + H2O + 2 H(+) = 2-C-methyl-D-erythritol 2,4-cyclic diphosphate + reduced [flavodoxin]. It participates in isoprenoid biosynthesis; isopentenyl diphosphate biosynthesis via DXP pathway; isopentenyl diphosphate from 1-deoxy-D-xylulose 5-phosphate: step 5/6. Converts 2C-methyl-D-erythritol 2,4-cyclodiphosphate (ME-2,4cPP) into 1-hydroxy-2-methyl-2-(E)-butenyl 4-diphosphate. The polypeptide is 4-hydroxy-3-methylbut-2-en-1-yl diphosphate synthase (flavodoxin) (Vibrio campbellii (strain ATCC BAA-1116)).